The chain runs to 367 residues: Ribosomal RNA large subunit methyltransferase M (367 aa).

Residues serine 189, cysteine 222–glycine 225, aspartate 241, aspartate 261, and aspartate 278 contribute to the S-adenosyl-L-methionine site. The active-site Proton acceptor is lysine 307.

Belongs to the class I-like SAM-binding methyltransferase superfamily. RNA methyltransferase RlmE family. RlmM subfamily. Monomer.

It is found in the cytoplasm. The catalysed reaction is cytidine(2498) in 23S rRNA + S-adenosyl-L-methionine = 2'-O-methylcytidine(2498) in 23S rRNA + S-adenosyl-L-homocysteine + H(+). Functionally, catalyzes the 2'-O-methylation at nucleotide C2498 in 23S rRNA. The protein is Ribosomal RNA large subunit methyltransferase M of Shewanella denitrificans (strain OS217 / ATCC BAA-1090 / DSM 15013).